The sequence spans 205 residues: Small ribosomal subunit protein uS4 (205 aa).

Residues 18 to 46 (NIWGRPKSPVNSRAYGPGQHGQRRKSKVS) are disordered. Residues 94 to 155 (SRLDAVVYRA…RSRNMALVLE (62 aa)) form the S4 RNA-binding domain.

This sequence belongs to the universal ribosomal protein uS4 family. In terms of assembly, part of the 30S ribosomal subunit. Contacts protein S5. The interaction surface between S4 and S5 is involved in control of translational fidelity.

In terms of biological role, one of the primary rRNA binding proteins, it binds directly to 16S rRNA where it nucleates assembly of the body of the 30S subunit. With S5 and S12 plays an important role in translational accuracy. This is Small ribosomal subunit protein uS4 from Phenylobacterium zucineum (strain HLK1).